The primary structure comprises 676 residues: RNA helicase NPH-II (676 aa).

In terms of domain architecture, Helicase ATP-binding spans 172–347; it reads FSAWISHRPV…VFLPNPAFIH (176 aa). An ATP-binding site is contributed by 185–192; sequence GGTGVGKT. A DEXH box motif is present at residues 296 to 299; the sequence is DEVH. The Helicase C-terminal domain maps to 366-542; that stretch reads NPSSRMAYIE…KFNLTLPEDL (177 aa).

This sequence belongs to the DEAD box helicase family. DEAH subfamily. As to quaternary structure, monomer.

The protein resides in the virion. The enzyme catalyses ATP + H2O = ADP + phosphate + H(+). Functionally, NTP-dependent helicase that catalyzes unidirectional unwinding of 3'tailed duplex RNAs and plays an important role during transcription of early mRNAs, presumably by preventing R-loop formation behind the elongating RNA polymerase. Might also play a role in the export of newly synthesized mRNA chains out of the core into the cytoplasm. Required for replication and propagation of viral particles. The protein is RNA helicase NPH-II (OPG084) of Homo sapiens (Human).